We begin with the raw amino-acid sequence, 212 residues long: Large ribosomal subunit protein bL25 (212 aa).

Residues 190–212 are disordered; sequence IAEAGDALAEPEVISKGSGEADE.

This sequence belongs to the bacterial ribosomal protein bL25 family. CTC subfamily. Part of the 50S ribosomal subunit; part of the 5S rRNA/L5/L18/L25 subcomplex. Contacts the 5S rRNA. Binds to the 5S rRNA independently of L5 and L18.

In terms of biological role, this is one of the proteins that binds to the 5S RNA in the ribosome where it forms part of the central protuberance. This is Large ribosomal subunit protein bL25 from Rhodopirellula baltica (strain DSM 10527 / NCIMB 13988 / SH1).